A 125-amino-acid chain; its full sequence is DQDCLPGWSYFEKYCYKVFQVKKNWEDAEKFCTEEVKDGHLISLHSNEEVEFMTSLAFPILKYDIVWMGLRNFWRDCPWKWSDDAKLDYKAWSDEPNCYGAMTTDYQWLRWNCNDPRYFVCKSPA.

3 disulfide bridges follow: Cys-4–Cys-15, Cys-32–Cys-121, and Cys-98–Cys-113. The region spanning 11 to 122 is the C-type lectin domain; it reads FEKYCYKVFQ…CNDPRYFVCK (112 aa).

This sequence belongs to the snaclec family. In terms of assembly, heterodimer of subunits alpha and beta; disulfide-linked. As to expression, expressed by the venom gland.

The protein localises to the secreted. Functionally, inhibits integrin alpha-2/beta-1- (ITGA2/ITGB1) dependent melanoma metastasis. The protein is Snaclec VP12 subunit B of Daboia palaestinae (Palestine viper).